A 267-amino-acid polypeptide reads, in one-letter code: MRVAALISGGKDSCYNMMQCIAEGHQIVALANLRPDENQVESDELDSYMYQTVGHHAIDLYAEAMALPLYRRAIRGRSLETGRVYTQCEGDEVEDLYELLKLVKEKEEIEGVSVGAILSDYQRGRVENVCKRLNLQPLAYLWQRNQEDLLREMIASNIKAIIIKVAALGLDPDKHLGKTLVEMEPYLLELSKKYGVHVCGEGGEYETFTLDCPLFKKKIVVDSSEAVMHSADAFAPVAYLRLSRLHLEEKVSSVPADDETANSIHSS.

Y97 is modified (phosphotyrosine).

This sequence belongs to the Diphthine--ammonia ligase family.

The catalysed reaction is diphthine-[translation elongation factor 2] + NH4(+) + ATP = diphthamide-[translation elongation factor 2] + AMP + diphosphate + H(+). It participates in protein modification; peptidyl-diphthamide biosynthesis. In terms of biological role, amidase that catalyzes the last step of diphthamide biosynthesis using ammonium and ATP. Diphthamide biosynthesis consists in the conversion of an L-histidine residue in the translation elongation factor 2 (EEF2) to diphthamide. This is Diphthine--ammonia ligase (Dph6) from Mus musculus (Mouse).